A 181-amino-acid chain; its full sequence is Large ribosomal subunit protein uL5 (181 aa).

It belongs to the universal ribosomal protein uL5 family. In terms of assembly, part of the 50S ribosomal subunit; part of the 5S rRNA/L5/L18/L25 subcomplex. Contacts the 5S rRNA and the P site tRNA. Forms a bridge to the 30S subunit in the 70S ribosome.

Its function is as follows. This is one of the proteins that bind and probably mediate the attachment of the 5S RNA into the large ribosomal subunit, where it forms part of the central protuberance. In the 70S ribosome it contacts protein S13 of the 30S subunit (bridge B1b), connecting the 2 subunits; this bridge is implicated in subunit movement. Contacts the P site tRNA; the 5S rRNA and some of its associated proteins might help stabilize positioning of ribosome-bound tRNAs. This is Large ribosomal subunit protein uL5 from Campylobacter jejuni subsp. jejuni serotype O:6 (strain 81116 / NCTC 11828).